The sequence spans 829 residues: MSTNPKPQRKTKRNTNRRPQDVKFPGGGQIVGGVYLLPRRGPRLGVRATRKTSERSQPRGRRQPIPKARRPKGRNWAQPGYPWPLYGNEGCGWAGWLPSPRGSRPSWGPNDPRRRSRNLGKVIDTLTCGFVDLMGYIPLVGAPLRGAARALAHGVRVLEDGVNYATGNLPGCSFSIFLLALLSCLTVPASAYQVRNSTGLYHVTNDCPNSSIVYEAVDAILHTPGCVPCVREGNASRCWVAMTPTVATRDGRLPTTQLRRHIDLLVGSATLCSALYVGDLCGSVFLVGQLFTFSPRRHWTTQGCNCSIYPGHITGHRMAWDMMMNWSPTTALVVAQLLRIPQAILDMIAGAHWGVLAGMAYFSMVGNWAKVLAVLLLFAGVDAETHVTGGAAARSTLQLAGLFQPGAKQNVQLINTNGSWHVNRTALNCNDSLNTGWIAGLFYYHGFNSSGCSERLASCRSLTDFDQGWGPISYAGGGGPDHRPYCWHYPPKPCGIVPAKSVCGPVYCFTPSPVVVGTTDRSGAPTYSWGADDTDVFVLNNTRPPLGNWFGCTWMNSTGFTKVCGAPPCVIGGVGNNTLHCPTDCFRKHPEATYSRCGSGPWLTPRCLVDYPYRLWHYPCTINHSIFKVRMYVGGVEHRLDAACNWTRGERCDLEDRDRSELSPLLLSTTQWQVLPCSFTTLPALSTGLIHLHQNIVDVQYLYGVGSSIASWAIKWEYVVLLFLLLADARVCSCLWMMLLISQAEAALENLVVLNAASLAGTHGLVSFLVFFCFAWFLRGKWVPGAVYALYGMWPLLLLLLALPQRAYALDTEVAASCGGVVLVGLMAL.

At Ser-2 the chain carries N-acetylserine; by host. The interval 2-23 (STNPKPQRKTKRNTNRRPQDVK) is interaction with STAT1. An interaction with EIF2AK2/PKR region spans residues 2-58 (STNPKPQRKTKRNTNRRPQDVKFPGGGQIVGGVYLLPRRGPRLGVRATRKTSERSQP). Residues 2–59 (STNPKPQRKTKRNTNRRPQDVKFPGGGQIVGGVYLLPRRGPRLGVRATRKTSERSQPR) form an interaction with DDX3X region. The interval 2 to 75 (STNPKPQRKT…PKARRPKGRN (74 aa)) is disordered. Residues 2-168 (STNPKPQRKT…EDGVNYATGN (167 aa)) lie on the Cytoplasmic side of the membrane. 2 consecutive short sequence motifs (nuclear localization signal) follow at residues 5 to 13 (PKPQRKTKR) and 38 to 43 (PRRGPR). Positions 7-16 (PQRKTKRNTN) are enriched in basic residues. Positions 32 to 47 (GGVYLLPRRGPRLGVR) are enriched in low complexity. Ser-53 carries the phosphoserine; by host modification. Short sequence motifs (nuclear localization signal) lie at residues 58 to 64 (PRGRRQP) and 66 to 71 (PKARRP). Positions 58-73 (PRGRRQPIPKARRPKG) are enriched in basic residues. Ser-99 bears the Phosphoserine; by host mark. Positions 112-152 (PRRRSRNLGKVIDTLTCGFVDLMGYIPLVGAPLRGAARALA) are important for endoplasmic reticulum and mitochondrial localization. A Phosphoserine; by host PKA modification is found at Ser-116. The interval 122-173 (VIDTLTCGFVDLMGYIPLVGAPLRGAARALAHGVRVLEDGVNYATGNLPGCS) is interaction with APOA2. The interval 164–167 (YATG) is important for lipid droplets localization. Residues 169–189 (LPGCSFSIFLLALLSCLTVPA) traverse the membrane as a helical segment. Positions 178-191 (LLALLSCLTVPASA) are cleaved as a propeptide — ER anchor for the core protein, removed in mature form by host signal peptidase. Over 190-358 (SAYQVRNSTG…AGAHWGVLAG (169 aa)) the chain is Lumenal. Asn-196, Asn-209, and Asn-234 each carry an N-linked (GlcNAc...) asparagine; by host glycan. The important for fusion stretch occupies residues 265 to 296 (LVGSATLCSALYVGDLCGSVFLVGQLFTFSPR). Residue Asn-305 is glycosylated (N-linked (GlcNAc...) asparagine; by host). A helical membrane pass occupies residues 359 to 379 (MAYFSMVGNWAKVLAVLLLFA). Residues 380-725 (GVDAETHVTG…WEYVVLLFLL (346 aa)) are Lumenal-facing. Residues 385–411 (THVTGGAAARSTLQLAGLFQPGAKQNV) form an HVR1 region. Asn-417, Asn-423, Asn-430, and Asn-448 each carry an N-linked (GlcNAc...) (high mannose) asparagine; by host glycan. 4 cysteine pairs are disulfide-bonded: Cys-429/Cys-552, Cys-452/Cys-459, Cys-486/Cys-494, and Cys-503/Cys-508. Positions 474 to 479 (YAGGGG) are HVR2. The segment at 480-493 (PDHRPYCWHYPPKP) is CD81-binding 1. An N-linked (GlcNAc...) asparagine; by host glycan is attached at Asn-540. A CD81-binding 2 region spans residues 544–551 (PPLGNWFG). An N-linked (GlcNAc...) (high mannose) asparagine; by host glycan is attached at Asn-556. A disulfide bridge connects residues Cys-564 and Cys-569. Asn-576 is a glycosylation site (N-linked (GlcNAc...) (high mannose) asparagine; by host). Disulfide bonds link Cys-581-Cys-585, Cys-597-Cys-620, and Cys-607-Cys-644. Asn-623 and Asn-645 each carry an N-linked (GlcNAc...) (high mannose) asparagine; by host glycan. An intrachain disulfide couples Cys-652 to Cys-677. The tract at residues 660–671 (SELSPLLLSTTQ) is PKR/eIF2-alpha phosphorylation homology domain (PePHD). Residues 726–746 (LADARVCSCLWMMLLISQAEA) traverse the membrane as a helical segment. At 747–757 (ALENLVVLNAA) the chain is on the lumenal side. A helical transmembrane segment spans residues 758 to 778 (SLAGTHGLVSFLVFFCFAWFL). At 779–781 (RGK) the chain is on the cytoplasmic side. Residues 782 to 803 (WVPGAVYALYGMWPLLLLLLAL) traverse the membrane as a helical segment. The Lumenal segment spans residues 804-813 (PQRAYALDTE). The chain crosses the membrane as a helical span at residues 814 to 829 (VAASCGGVVLVGLMAL).

Belongs to the hepacivirus polyprotein family. Homooligomer. Interacts with E1 (via C-terminus). Interacts with the non-structural protein 5A. Interacts (via N-terminus) with host STAT1 (via SH2 domain); this interaction results in decreased STAT1 phosphorylation and ubiquitin-mediated proteasome-dependent STAT1 degradation, leading to decreased IFN-stimulated gene transcription. Interacts with host STAT3; this interaction constitutively activates STAT3. Interacts with host LTBR receptor. Interacts with host TNFRSF1A receptor and possibly induces apoptosis. Interacts with host HNRPK. Interacts with host YWHAE. Interacts with host UBE3A/E6AP. Interacts with host DDX3X. Interacts with host APOA2. Interacts with host RXRA protein. Interacts with host SP110 isoform 3/Sp110b; this interaction sequesters the transcriptional corepressor SP110 away from the nucleus. Interacts with host CREB3 nuclear transcription protein; this interaction triggers cell transformation. Interacts with host ACY3. Interacts with host C1QR1. Interacts with host RBM24; this interaction, which enhances the interaction of the mature core protein with 5'-UTR, may inhibit viral translation and favor replication. Interacts with host EIF2AK2/PKR; this interaction induces the autophosphorylation of EIF2AK2. Part of the viral assembly initiation complex composed of NS2, E1, E2, NS3, NS4A, NS5A and the mature core protein. As to quaternary structure, forms a heterodimer with envelope glycoprotein E2. Interacts with mature core protein. Interacts with protease NS2. The heterodimer E1/E2 interacts with host CLDN1; this interaction plays a role in viral entry into host cell. Interacts with host SPSB2 (via C-terminus). Part of the viral assembly initiation complex composed of NS2, E1, E2, NS3, NS4A, NS5A and the mature core protein. In terms of assembly, forms a heterodimer with envelope glycoprotein E1. Interacts with host CD81 and SCARB1 receptors; these interactions play a role in viral entry into host cell. Interacts with host EIF2AK2/PKR; this interaction inhibits EIF2AK2 and probably allows the virus to evade the innate immune response. Interacts with host CD209/DC-SIGN and CLEC4M/DC-SIGNR. Interact with host SPCS1; this interaction is essential for viral particle assembly. Interacts with protease NS2. The heterodimer E1/E2 interacts with host CLDN1; this interaction plays a role in viral entry into host cell. Part of the viral assembly initiation complex composed of NS2, E1, E2, NS3, NS4A, NS5A and the mature core protein. Homohexamer. Homoheptamer. Interacts with protease NS2. As to quaternary structure, homodimer. Interacts with host SPCS1; this interaction is essential for viral particle assembly. Interacts with envelope glycoprotein E1. Interacts with envelope glycoprotein E2. Interacts with viroporin p7. Interacts with serine protease/helicase NS3. Part of the replication complex composed of NS2, NS3, NS4A, NS4B, NS5A and the RNA-directed RNA polymerase embedded in an ER-derived membranous web. Part of the viral assembly initiation complex composed of NS2, E1, E2, NS3, NS4A, NS5A and the mature core protein. It depends on Zn(2+) as a cofactor. Specific enzymatic cleavages in vivo yield mature proteins. The structural proteins, core, E1, E2 and p7 are produced by proteolytic processing by host signal peptidases. The core protein precursor is synthesized as a 23 kDa, which is retained in the ER membrane through the hydrophobic signal peptide. Cleavage by the signal peptidase releases the 21 kDa mature core protein. The cleavage of the core protein precursor occurs between aminoacids 176 and 188 but the exact cleavage site is not known. Some degraded forms of the core protein appear as well during the course of infection. The other proteins (p7, NS2, NS3, NS4A, NS4B, NS5A and NS5B) are cleaved by the viral proteases. Autoprocessing between NS2 and NS3 is mediated by the NS2 cysteine protease catalytic domain and regulated by the NS3 N-terminal domain. Post-translationally, phosphorylated by host PKC and PKA. In terms of processing, ubiquitinated; mediated by UBE3A and leading to core protein subsequent proteasomal degradation. Highly N-glycosylated. Post-translationally, palmitoylation is required for NS2/3 autoprocessing and E2 recruitment to membranes.

The protein resides in the host endoplasmic reticulum membrane. The protein localises to the host mitochondrion membrane. Its subcellular location is the virion. It is found in the host cytoplasm. It localises to the host nucleus. The protein resides in the host lipid droplet. The protein localises to the virion membrane. Its subcellular location is the host mitochondrion. It is found in the host cell membrane. Its activity is regulated as follows. Inhibited by the antiviral drug hexamethylene amiloride. Inhibition by amantadine appears to be genotype-dependent. Also inhibited by long-alkyl-chain iminosugar derivatives. In terms of biological role, packages viral RNA to form a viral nucleocapsid, and promotes virion budding. Participates in the viral particle production as a result of its interaction with the non-structural protein 5A. Binds RNA and may function as a RNA chaperone to induce the RNA structural rearrangements taking place during virus replication. Modulates viral translation initiation by interacting with viral IRES and 40S ribosomal subunit. Affects various cell signaling pathways, host immunity and lipid metabolism. Prevents the establishment of cellular antiviral state by blocking the interferon-alpha/beta (IFN-alpha/beta) and IFN-gamma signaling pathways and by blocking the formation of phosphorylated STAT1 and promoting ubiquitin-mediated proteasome-dependent degradation of STAT1. Activates STAT3 leading to cellular transformation. Regulates the activity of cellular genes, including c-myc and c-fos. May repress the promoter of p53, and sequester CREB3 and SP110 isoform 3/Sp110b in the cytoplasm. Represses cell cycle negative regulating factor CDKN1A, thereby interrupting an important check point of normal cell cycle regulation. Targets transcription factors involved in the regulation of inflammatory responses and in the immune response: suppresses TNF-induced NF-kappa-B activation, and activates AP-1. Binds to dendritic cells (DCs) via C1QR1, resulting in down-regulation of T-lymphocytes proliferation. Alters lipid metabolism by interacting with hepatocellular proteins involved in lipid accumulation and storage. Induces up-regulation of FAS promoter activity, and thereby contributes to the increased triglyceride accumulation in hepatocytes (steatosis). Functionally, forms a heterodimer with envelope glycoprotein E2, which mediates virus attachment to the host cell, virion internalization through clathrin-dependent endocytosis and fusion with host membrane. Fusion with the host cell is most likely mediated by both E1 and E2, through conformational rearrangements of the heterodimer required for fusion rather than a classical class II fusion mechanism. E1/E2 heterodimer binds host apolipoproteins such as APOB and ApoE thereby forming a lipo-viro-particle (LVP). APOE associated to the LVP allows the initial virus attachment to cell surface receptors such as the heparan sulfate proteoglycans (HSPGs), syndecan-1 (SDC1), syndecan-1 (SDC2), the low-density lipoprotein receptor (LDLR) and scavenger receptor class B type I (SCARB1). The cholesterol transfer activity of SCARB1 allows E2 exposure and binding of E2 to SCARB1 and the tetraspanin CD81. E1/E2 heterodimer binding on CD81 activates the epithelial growth factor receptor (EGFR) signaling pathway. Diffusion of the complex E1-E2-EGFR-SCARB1-CD81 to the cell lateral membrane allows further interaction with Claudin 1 (CLDN1) and occludin (OCLN) to finally trigger HCV entry. Its function is as follows. Forms a heterodimer with envelope glycoprotein E1, which mediates virus attachment to the host cell, virion internalization through clathrin-dependent endocytosis and fusion with host membrane. Fusion with the host cell is most likely mediated by both E1 and E2, through conformational rearrangements of the heterodimer required for fusion rather than a classical class II fusion mechanism. The interaction between envelope glycoprotein E2 and host apolipoprotein E/APOE allows the proper assembly, maturation and infectivity of the viral particles. This interaction is probably promoted via the up-regulation of cellular autophagy by the virus. E1/E2 heterodimer binds host apolipoproteins such as APOB and APOE thereby forming a lipo-viro-particle (LVP). APOE associated to the LVP allows the initial virus attachment to cell surface receptors such as the heparan sulfate proteoglycans (HSPGs), syndecan-1 (SDC1), syndecan-1 (SDC2), the low-density lipoprotein receptor (LDLR) and scavenger receptor class B type I (SCARB1). The cholesterol transfer activity of SCARB1 allows E2 exposure and binding of E2 to SCARB1 and the tetraspanin CD81. E1/E2 heterodimer binding on CD81 activates the epithelial growth factor receptor (EGFR) signaling pathway. Diffusion of the complex E1-E2-EGFR-SCARB1-CD81 to the cell lateral membrane allows further interaction with Claudin 1 (CLDN1) and occludin (OCLN) to finally trigger HCV entry. Inhibits host EIF2AK2/PKR activation, preventing the establishment of an antiviral state. Viral ligand for CD209/DC-SIGN and CLEC4M/DC-SIGNR, which are respectively found on dendritic cells (DCs), and on liver sinusoidal endothelial cells and macrophage-like cells of lymph node sinuses. These interactions allow the capture of circulating HCV particles by these cells and subsequent facilitated transmission to permissive cells such as hepatocytes and lymphocyte subpopulations. Ion channel protein that acts as a viroporin and plays an essential role in the assembly, envelopment and secretion of viral particles. Regulates the host cell secretory pathway, which induces the intracellular retention of viral glycoproteins and favors assembly of viral particles. Creates a pore in acidic organelles and releases Ca(2+) and H(+) in the cytoplasm of infected cells, leading to a productive viral infection. High levels of cytoplasmic Ca(2+) may trigger membrane trafficking and transport of viral ER-associated proteins to viroplasms, sites of viral genome replication. This ionic imbalance induces the assembly of the inflammasome complex, which triggers the maturation of pro-IL-1beta into IL-1beta through the action of caspase-1. Targets also host mitochondria and induces mitochondrial depolarization. In addition of its role as a viroporin, acts as a lipid raft adhesion factor. In terms of biological role, cysteine protease required for the proteolytic auto-cleavage between the non-structural proteins NS2 and NS3. The N-terminus of NS3 is required for the function of NS2 protease (active region NS2-3). Promotes the initiation of viral particle assembly by mediating the interaction between structural and non-structural proteins. The chain is Genome polyprotein from Hepatitis C virus (isolate Glasgow) (HCV).